The sequence spans 109 residues: Iron-sulfur cluster assembly protein CyaY (109 aa).

This sequence belongs to the frataxin family.

Functionally, involved in iron-sulfur (Fe-S) cluster assembly. May act as a regulator of Fe-S biogenesis. The protein is Iron-sulfur cluster assembly protein CyaY of Shewanella putrefaciens (strain CN-32 / ATCC BAA-453).